The sequence spans 254 residues: Ribonuclease PH (254 aa).

Residues R86 and 124-126 (GTR) contribute to the phosphate site.

The protein belongs to the RNase PH family. In terms of assembly, homohexameric ring arranged as a trimer of dimers.

It carries out the reaction tRNA(n+1) + phosphate = tRNA(n) + a ribonucleoside 5'-diphosphate. Phosphorolytic 3'-5' exoribonuclease that plays an important role in tRNA 3'-end maturation. Removes nucleotide residues following the 3'-CCA terminus of tRNAs; can also add nucleotides to the ends of RNA molecules by using nucleoside diphosphates as substrates, but this may not be physiologically important. Probably plays a role in initiation of 16S rRNA degradation (leading to ribosome degradation) during starvation. The polypeptide is Ribonuclease PH (Carboxydothermus hydrogenoformans (strain ATCC BAA-161 / DSM 6008 / Z-2901)).